We begin with the raw amino-acid sequence, 346 residues long: Partitioning defective 6 homolog alpha (346 aa).

Residues 1-116 (MARPQRTPAR…SNSLQRRKKG (116 aa)) are interaction with PRKCI and PRKCZ. The PB1 domain maps to 15-95 (IVEVKSKFDA…PPLRLLVQKR (81 aa)). The interval 126–253 (RTRPPLLISL…VTVKPANQRN (128 aa)) is interaction with PARD3 and CDC42. Residues 133 to 150 (ISLPQDFRQVSSVIDVDL) enclose the Pseudo-CRIB domain. Positions 157–250 (RVRLHKHGSD…NLIVTVKPAN (94 aa)) constitute a PDZ domain. 2 disordered regions span residues 257-294 (RGASGRLTGPSSVGPGPTDPDSDDDNSDPVIENRHPPC) and 317-346 (GSSLPSLDSREQANSGWGNGMRGDVSGFSL). Ser278 is modified (phosphoserine). Positions 317-332 (GSSLPSLDSREQANSG) are enriched in polar residues. A Phosphoserine modification is found at Ser345.

This sequence belongs to the PAR6 family. Interacts with PALS1 and CRB3. Interacts with PARD3. Interacts with GTP-bound forms of CDC42, RHOQ/TC10 and RAC1. Interacts with the N-terminal part of PRKCI and PRKCZ. Part of a complex with PARD3, CDC42 or RAC1 and PRKCI or PRKCZ. Part of a complex with LLGL1 and PRKCI. Interacts with MAP2K5. Interacts with TGFBR1; involved in TGF-beta induced epithelial to mesenchymal transition. Interacts with ECT2 ('Thr-359' phosphorylated form) and PRKCI. Interacts with DCTN1 and PCM1. Phosphorylated by the TGF-beta receptor. In terms of processing, ubiquitinated by the SCF(FBXO31) complex, leading to its proteasomal degradation.

It is found in the cytoplasm. It localises to the cell membrane. The protein localises to the cell junction. The protein resides in the tight junction. Its subcellular location is the cytoskeleton. It is found in the microtubule organizing center. It localises to the centrosome. The protein localises to the centriolar satellite. Adapter protein involved in asymmetrical cell division and cell polarization processes. Probably involved in the formation of epithelial tight junctions. Association with PARD3 may prevent the interaction of PARD3 with F11R/JAM1, thereby preventing tight junction assembly. The PARD6-PARD3 complex links GTP-bound Rho small GTPases to atypical protein kinase C proteins. Regulates centrosome organization and function. Essential for the centrosomal recruitment of key proteins that control centrosomal microtubule organization. The polypeptide is Partitioning defective 6 homolog alpha (Pard6a) (Rattus norvegicus (Rat)).